The chain runs to 517 residues: MKLAPDLLQATFEQTFSILQQARRSFSPQLQPREIGTITSIATGIAKVSGLPGVGFEEILKFPSDIFGIAFNVDEDEIGAVLLGDYWHLQAGDEVERCGHLVDVPVGEGLLGRIINPIGEPLDGKGRLIASARLPIERPSPAIMNRAPVSVPLQTGIKVIDALIPVGLGQRELILGDRQTGKTAIAVDTILNQRDKNVLCVYCAIGQRASGVAKVIATLHEQGALEYTVVVVTEGNDPPGLAYIAPYAATSIAEYFMQQGRNVLIVYDDLTHHARAYRELSLLLRRPPGREAFPGDIFYIHSRLLERATHLSPNLGGGSLTALPIIETEAQDISAYIPTNLISITDGQIYLSPSLFELGVLPAIDVGKSVSRVGGKAQRAAYRAVASNLKLAYAQFEELETFASFGARLDDSTLKTIDHGRRIRACLKQAESTPISMIEQIAVLLALTANLFDEVPLDVMSQAEHAVRAATADIPVEITARLASTEKLTDEDRDGILQPVRDALAPFMHSQKRKEIT.

Position 176 to 183 (176 to 183 (GDRQTGKT)) interacts with ATP.

This sequence belongs to the ATPase alpha/beta chains family. F-type ATPases have 2 components, CF(1) - the catalytic core - and CF(0) - the membrane proton channel. CF(1) has five subunits: alpha(3), beta(3), gamma(1), delta(1), epsilon(1). CF(0) has three main subunits: a(1), b(2) and c(9-12). The alpha and beta chains form an alternating ring which encloses part of the gamma chain. CF(1) is attached to CF(0) by a central stalk formed by the gamma and epsilon chains, while a peripheral stalk is formed by the delta and b chains.

The protein localises to the cell inner membrane. The enzyme catalyses ATP + H2O + 4 H(+)(in) = ADP + phosphate + 5 H(+)(out). Its function is as follows. Produces ATP from ADP in the presence of a proton gradient across the membrane. The alpha chain is a regulatory subunit. This chain is ATP synthase subunit alpha 1, found in Shewanella frigidimarina (strain NCIMB 400).